The primary structure comprises 249 residues: 23S rRNA (guanosine-2'-O-)-methyltransferase RlmB (249 aa).

Residues glycine 200, isoleucine 220, and leucine 229 each coordinate S-adenosyl-L-methionine.

This sequence belongs to the class IV-like SAM-binding methyltransferase superfamily. RNA methyltransferase TrmH family. RlmB subfamily.

The protein resides in the cytoplasm. The catalysed reaction is guanosine(2251) in 23S rRNA + S-adenosyl-L-methionine = 2'-O-methylguanosine(2251) in 23S rRNA + S-adenosyl-L-homocysteine + H(+). Functionally, specifically methylates the ribose of guanosine 2251 in 23S rRNA. The protein is 23S rRNA (guanosine-2'-O-)-methyltransferase RlmB of Xanthomonas axonopodis pv. citri (strain 306).